A 96-amino-acid polypeptide reads, in one-letter code: Non-specific lipid-transfer protein 2 (96 aa).

The N-terminal stretch at 1–27 is a signal peptide; it reads MMRKLAVLVLAVAMVAACGGGVVGVAG. Disulfide bonds link Cys30-Cys62, Cys38-Cys52, Cys53-Cys88, and Cys64-Cys95.

Functionally, transfer lipids across membranes. May play a role in plant defense or in the biosynthesis of cuticle layers. The sequence is that of Non-specific lipid-transfer protein 2 (LTP-2) from Oryza sativa subsp. japonica (Rice).